We begin with the raw amino-acid sequence, 89 residues long: Co-chaperonin GroES (89 aa).

It belongs to the GroES chaperonin family. Heptamer of 7 subunits arranged in a ring. Interacts with the chaperonin GroEL.

The protein resides in the cytoplasm. Together with the chaperonin GroEL, plays an essential role in assisting protein folding. The GroEL-GroES system forms a nano-cage that allows encapsulation of the non-native substrate proteins and provides a physical environment optimized to promote and accelerate protein folding. GroES binds to the apical surface of the GroEL ring, thereby capping the opening of the GroEL channel. This Porphyromonas gingivalis (strain ATCC 33277 / DSM 20709 / CIP 103683 / JCM 12257 / NCTC 11834 / 2561) protein is Co-chaperonin GroES.